We begin with the raw amino-acid sequence, 316 residues long: Ribosomal protein L11 methyltransferase (316 aa).

Thr157, Gly178, Asp200, and Asn243 together coordinate S-adenosyl-L-methionine.

This sequence belongs to the methyltransferase superfamily. PrmA family.

The protein localises to the cytoplasm. The enzyme catalyses L-lysyl-[protein] + 3 S-adenosyl-L-methionine = N(6),N(6),N(6)-trimethyl-L-lysyl-[protein] + 3 S-adenosyl-L-homocysteine + 3 H(+). In terms of biological role, methylates ribosomal protein L11. The chain is Ribosomal protein L11 methyltransferase from Streptococcus pneumoniae (strain JJA).